Consider the following 178-residue polypeptide: Large ribosomal subunit protein uL6 (178 aa).

The protein belongs to the universal ribosomal protein uL6 family. In terms of assembly, part of the 50S ribosomal subunit.

This protein binds to the 23S rRNA, and is important in its secondary structure. It is located near the subunit interface in the base of the L7/L12 stalk, and near the tRNA binding site of the peptidyltransferase center. This Listeria monocytogenes serotype 4a (strain HCC23) protein is Large ribosomal subunit protein uL6.